The primary structure comprises 118 residues: GRB2-related adapter protein-like (118 aa).

The region spanning 1–58 is the SH3 domain; it reads MESVALYSFQATESDELAFNKGDTLKILNMEDDQNWYKAELRGVEGFIPKNYIRVKPH. In terms of domain architecture, SH2 spans 60-118; it reads WYSGRISRQLAEEILMKRNHLGAFLIRESESSPGEFSVSVNNRAQRGPCLGPKSHSRLG. Residues 89–118 form a disordered region; sequence ESSPGEFSVSVNNRAQRGPCLGPKSHSRLG. Residues 90–103 show a composition bias toward polar residues; it reads SSPGEFSVSVNNRA.

Belongs to the GRB2/sem-5/DRK family.

This Homo sapiens (Human) protein is GRB2-related adapter protein-like (GRAPL).